We begin with the raw amino-acid sequence, 575 residues long: Urease subunit alpha (575 aa).

The Urease domain occupies 137–575; sequence GGIDSHIHWI…LPMAQRYFLF (439 aa). The Ni(2+) site is built by histidine 142, histidine 144, and lysine 225. Residue lysine 225 is modified to N6-carboxylysine. Substrate is bound at residue histidine 227. Ni(2+) is bound by residues histidine 254 and histidine 280. Histidine 328 acts as the Proton donor in catalysis. Ni(2+) is bound at residue aspartate 368.

The protein belongs to the metallo-dependent hydrolases superfamily. Urease alpha subunit family. Heterotrimer of UreA (gamma), UreB (beta) and UreC (alpha) subunits. Three heterotrimers associate to form the active enzyme. Requires Ni cation as cofactor. Carboxylation allows a single lysine to coordinate two nickel ions.

It is found in the cytoplasm. It catalyses the reaction urea + 2 H2O + H(+) = hydrogencarbonate + 2 NH4(+). The protein operates within nitrogen metabolism; urea degradation; CO(2) and NH(3) from urea (urease route): step 1/1. This is Urease subunit alpha from Leptothrix cholodnii (strain ATCC 51168 / LMG 8142 / SP-6) (Leptothrix discophora (strain SP-6)).